A 186-amino-acid polypeptide reads, in one-letter code: Ribosome-recycling factor (186 aa).

This sequence belongs to the RRF family.

The protein localises to the cytoplasm. Responsible for the release of ribosomes from messenger RNA at the termination of protein biosynthesis. May increase the efficiency of translation by recycling ribosomes from one round of translation to another. This is Ribosome-recycling factor from Cupriavidus pinatubonensis (strain JMP 134 / LMG 1197) (Cupriavidus necator (strain JMP 134)).